The sequence spans 354 residues: DNA polymerase IV (354 aa).

In terms of domain architecture, UmuC spans 14–198 (IIHIDMDAFF…MDIAKFHGVG (185 aa)). Residues Asp18 and Asp116 each coordinate Mg(2+). Glu117 is a catalytic residue.

Belongs to the DNA polymerase type-Y family. Monomer. Mg(2+) serves as cofactor.

It localises to the cytoplasm. It catalyses the reaction DNA(n) + a 2'-deoxyribonucleoside 5'-triphosphate = DNA(n+1) + diphosphate. Poorly processive, error-prone DNA polymerase involved in untargeted mutagenesis. Copies undamaged DNA at stalled replication forks, which arise in vivo from mismatched or misaligned primer ends. These misaligned primers can be extended by PolIV. Exhibits no 3'-5' exonuclease (proofreading) activity. May be involved in translesional synthesis, in conjunction with the beta clamp from PolIII. The sequence is that of DNA polymerase IV from Streptococcus gordonii (strain Challis / ATCC 35105 / BCRC 15272 / CH1 / DL1 / V288).